A 579-amino-acid polypeptide reads, in one-letter code: PCNA-interacting partner (579 aa).

The tract at residues threonine 480–serine 543 is disordered. The segment covering histidine 486–serine 496 has biased composition (basic and acidic residues).

This sequence belongs to the PARI family. Interacts with RAD51 and PCNA. Interacts with PARP1. Interacts with TASOR. In terms of tissue distribution, restricted to testis. Overexpressed in multiple cancer cells.

Its subcellular location is the cytoplasm. It localises to the nucleus. Required to suppress inappropriate homologous recombination, thereby playing a central role DNA repair and in the maintenance of genomic stability. Antagonizes homologous recombination by interfering with the formation of the RAD51-DNA homologous recombination structure. Binds single-strand DNA and poly(A) homopolymers. Positively regulate the poly(ADP-ribosyl)ation activity of PARP1; however such function may be indirect. This is PCNA-interacting partner (PARPBP) from Homo sapiens (Human).